We begin with the raw amino-acid sequence, 363 residues long: tRNA N6-adenosine threonylcarbamoyltransferase (363 aa).

2 residues coordinate Fe cation: His-121 and His-125. Substrate contacts are provided by residues 143–147, Asp-176, Gly-189, and Asn-287; that span reads LASGG. Asp-315 contacts Fe cation.

Belongs to the KAE1 / TsaD family. Requires Fe(2+) as cofactor.

The protein resides in the cytoplasm. The enzyme catalyses L-threonylcarbamoyladenylate + adenosine(37) in tRNA = N(6)-L-threonylcarbamoyladenosine(37) in tRNA + AMP + H(+). In terms of biological role, required for the formation of a threonylcarbamoyl group on adenosine at position 37 (t(6)A37) in tRNAs that read codons beginning with adenine. Is involved in the transfer of the threonylcarbamoyl moiety of threonylcarbamoyl-AMP (TC-AMP) to the N6 group of A37, together with TsaE and TsaB. TsaD likely plays a direct catalytic role in this reaction. The sequence is that of tRNA N6-adenosine threonylcarbamoyltransferase from Rhodopseudomonas palustris (strain ATCC BAA-98 / CGA009).